The chain runs to 156 residues: ATP synthase subunit b (156 aa).

The helical transmembrane segment at 7-27 (LIAQFVVFFILAGFTMKFVWP) threads the bilayer.

Belongs to the ATPase B chain family. As to quaternary structure, F-type ATPases have 2 components, F(1) - the catalytic core - and F(0) - the membrane proton channel. F(1) has five subunits: alpha(3), beta(3), gamma(1), delta(1), epsilon(1). F(0) has three main subunits: a(1), b(2) and c(10-14). The alpha and beta chains form an alternating ring which encloses part of the gamma chain. F(1) is attached to F(0) by a central stalk formed by the gamma and epsilon chains, while a peripheral stalk is formed by the delta and b chains.

The protein resides in the cell inner membrane. F(1)F(0) ATP synthase produces ATP from ADP in the presence of a proton or sodium gradient. F-type ATPases consist of two structural domains, F(1) containing the extramembraneous catalytic core and F(0) containing the membrane proton channel, linked together by a central stalk and a peripheral stalk. During catalysis, ATP synthesis in the catalytic domain of F(1) is coupled via a rotary mechanism of the central stalk subunits to proton translocation. Its function is as follows. Component of the F(0) channel, it forms part of the peripheral stalk, linking F(1) to F(0). The protein is ATP synthase subunit b of Herminiimonas arsenicoxydans.